A 297-amino-acid polypeptide reads, in one-letter code: Homoserine kinase (297 aa).

An ATP-binding site is contributed by 82–92; it reads PLTRGLGSSAS.

Belongs to the GHMP kinase family. Homoserine kinase subfamily.

The protein resides in the cytoplasm. It carries out the reaction L-homoserine + ATP = O-phospho-L-homoserine + ADP + H(+). Its pathway is amino-acid biosynthesis; L-threonine biosynthesis; L-threonine from L-aspartate: step 4/5. Catalyzes the ATP-dependent phosphorylation of L-homoserine to L-homoserine phosphate. The protein is Homoserine kinase of Bacillus cereus (strain ZK / E33L).